We begin with the raw amino-acid sequence, 172 residues long: Adenine phosphoribosyltransferase (172 aa).

This sequence belongs to the purine/pyrimidine phosphoribosyltransferase family. Homodimer.

Its subcellular location is the cytoplasm. It catalyses the reaction AMP + diphosphate = 5-phospho-alpha-D-ribose 1-diphosphate + adenine. It participates in purine metabolism; AMP biosynthesis via salvage pathway; AMP from adenine: step 1/1. Its function is as follows. Catalyzes a salvage reaction resulting in the formation of AMP, that is energically less costly than de novo synthesis. In Streptococcus uberis (strain ATCC BAA-854 / 0140J), this protein is Adenine phosphoribosyltransferase.